The sequence spans 224 residues: Pro-thyrotropin-releasing hormone-B (224 aa).

A signal peptide spans 1–15; sequence MMFLWWLLLLGTAIS. Residue Q75 is modified to Pyrrolidone carboxylic acid. At P77 the chain carries Proline amide. Positions 86-101 are enriched in basic and acidic residues; the sequence is EKRQHPGKRDLEDLQL. Disordered regions lie at residues 86 to 131 and 150 to 212; these read EKRQ…DWSR and RQHP…NSGN. Position 89 is a pyrrolidone carboxylic acid (Q89). P91 is modified (proline amide). Q105 carries the pyrrolidone carboxylic acid modification. P107 bears the Proline amide mark. Over residues 110–129 the composition is skewed to basic and acidic residues; sequence RYLEDMEKRQHPGKREEGDW. Q119 carries the pyrrolidone carboxylic acid modification. Position 121 is a proline amide (P121). Position 151 is a pyrrolidone carboxylic acid (Q151). A Proline amide modification is found at P153. Q166 is modified (pyrrolidone carboxylic acid). P168 carries the proline amide modification. The span at 182-199 shows a compositional bias: basic and acidic residues; that stretch reads ENSKEVGKRQHPGKRYDP. Residue Q191 is modified to Pyrrolidone carboxylic acid. P193 is subject to Proline amide.

The protein belongs to the TRH family.

It is found in the secreted. The sequence is that of Pro-thyrotropin-releasing hormone-B (trh-b) from Xenopus laevis (African clawed frog).